The following is a 114-amino-acid chain: Putative protein TfaS (114 aa).

Belongs to the tfa family.

This is Putative protein TfaS (tfaS) from Escherichia coli (strain K12).